Reading from the N-terminus, the 130-residue chain is Small ribosomal subunit protein uS11 (130 aa).

Belongs to the universal ribosomal protein uS11 family. Part of the 30S ribosomal subunit. Interacts with proteins S7 and S18. Binds to IF-3.

Its function is as follows. Located on the platform of the 30S subunit, it bridges several disparate RNA helices of the 16S rRNA. Forms part of the Shine-Dalgarno cleft in the 70S ribosome. The sequence is that of Small ribosomal subunit protein uS11 from Dehalococcoides mccartyi (strain ATCC BAA-2266 / KCTC 15142 / 195) (Dehalococcoides ethenogenes (strain 195)).